The sequence spans 95 residues: Small ribosomal subunit protein uS19 (95 aa).

Residues Glu73–Lys95 are disordered.

Belongs to the universal ribosomal protein uS19 family.

Its function is as follows. Protein S19 forms a complex with S13 that binds strongly to the 16S ribosomal RNA. This chain is Small ribosomal subunit protein uS19, found in Deinococcus geothermalis (strain DSM 11300 / CIP 105573 / AG-3a).